Consider the following 207-residue polypeptide: High mobility group protein B2 (207 aa).

DNA-binding regions (HMG box) lie at residues 9-79 and 95-163; these read PRGK…KNYV and PKRP…AAYR. Residues cysteine 23 and cysteine 45 each carry the cysteine sulfonic acid (-SO3H); alternate modification. Cysteine 23 and cysteine 45 are disulfide-bonded. Basic and acidic residues predominate over residues 52–76; sequence MSSKEKGKFEEMAKGDKARYDREMK. The tract at residues 52 to 102 is disordered; that stretch reads MSSKEKGKFEEMAKGDKARYDREMKNYVPPKGEKKGKKKDPNAPKRPPSAF. Cysteine 106 is subject to Cysteine sulfonic acid (-SO3H). Residues 162–172 are compositionally biased toward basic and acidic residues; sequence YRAKSKSDAGK. The disordered stretch occupies residues 162–207; the sequence is YRAKSKSDAGKKGPGRPAGSKKKAEPEEEEEEEEDEEEEEEEEDEE. A compositionally biased stretch (acidic residues) spans 187–207; that stretch reads PEEEEEEEEDEEEEEEEEDEE.

Belongs to the HMGB family. Post-translationally, reduction/oxidation of cysteine residues Cys-23, Cys-45 and Cys-106 and a possible intramolecular disulfide bond involving Cys-23 and Cys-45 give rise to different redox forms with specific functional activities in various cellular compartments: 1- fully reduced HMGB2 (HMGB2C23hC45hC106h), 2- disulfide HMGB2 (HMGB2C23-C45C106h) and 3- sulfonyl HMGB2 (HMGB2C23soC45soC106so).

The protein localises to the nucleus. The protein resides in the chromosome. It is found in the cytoplasm. It localises to the secreted. Its function is as follows. Multifunctional protein with various roles in different cellular compartments. May act in a redox sensitive manner. Associates with chromatin and binds DNA with a preference to non-canonical DNA structures such as single-stranded DNA. Can bent DNA and enhance DNA flexibility by looping thus providing a mechanism to promote activities on various gene promoters. Proposed to be involved in the innate immune response to nucleic acids by acting as a cytoplasmic promiscuous immunogenic DNA/RNA sensor. Involved in inflammatory response to antigenic stimulus coupled with pro-inflammatory activity. This is High mobility group protein B2 (HMGB2) from Gallus gallus (Chicken).